Here is a 393-residue protein sequence, read N- to C-terminus: Small RNA 2'-O-methyltransferase (393 aa).

S-adenosyl-L-methionine contacts are provided by serine 60, aspartate 78, and serine 114. The Mg(2+) site is built by glutamate 132, glutamate 135, histidine 136, and histidine 181. A disordered region spans residues 283 to 309; the sequence is RVSHLPRRKEQDGEQGDKPKDIGGSKA. The segment covering 290–305 has biased composition (basic and acidic residues); that stretch reads RKEQDGEQGDKPKDIG.

This sequence belongs to the methyltransferase superfamily. HEN1 family. Mg(2+) serves as cofactor.

It is found in the cytoplasm. The enzyme catalyses small RNA 3'-end nucleotide + S-adenosyl-L-methionine = small RNA 3'-end 2'-O-methylnucleotide + S-adenosyl-L-homocysteine + H(+). Its function is as follows. Methyltransferase that adds a 2'-O-methyl group at the 3'-end of piRNAs, a class of 24 to 30 nucleotide RNAs that are generated by a Dicer-independent mechanism and are primarily derived from transposons and other repeated sequence elements. This probably protects the 3'-end of piRNAs from uridylation activity and subsequent degradation. Stabilization of piRNAs is essential for gametogenesis. In Macaca fascicularis (Crab-eating macaque), this protein is Small RNA 2'-O-methyltransferase (HENMT1).